The sequence spans 152 residues: Small ribosomal subunit protein uS8m (152 aa).

It belongs to the universal ribosomal protein uS8 family. Component of the mitochondrial small ribosomal subunit (mt-SSU). Mature yeast 74S mitochondrial ribosomes consist of a small (37S) and a large (54S) subunit. The 37S small subunit contains a 15S ribosomal RNA (15S mt-rRNA) and at least 32 different proteins. The 54S large subunit contains a 21S rRNA (21S mt-rRNA) and at least 45 different proteins.

It is found in the mitochondrion. Functionally, component of the mitochondrial ribosome (mitoribosome), a dedicated translation machinery responsible for the synthesis of mitochondrial genome-encoded proteins, including at least some of the essential transmembrane subunits of the mitochondrial respiratory chain. The mitoribosomes are attached to the mitochondrial inner membrane and translation products are cotranslationally integrated into the membrane. The protein is Small ribosomal subunit protein uS8m (mrps8) of Schizosaccharomyces pombe (strain 972 / ATCC 24843) (Fission yeast).